The following is a 150-amino-acid chain: Catabolic 3-dehydroquinase 1 (150 aa).

Tyrosine 24 serves as the catalytic Proton acceptor. Residues asparagine 75, histidine 81, and aspartate 88 each coordinate substrate. Histidine 101 serves as the catalytic Proton donor. Residues 102-103 and arginine 112 each bind substrate; that span reads VS.

Belongs to the type-II 3-dehydroquinase family. In terms of assembly, homododecamer. Adopts a ring-like structure, composed of an arrangement of two hexameric rings stacked on top of one another.

The catalysed reaction is 3-dehydroquinate = 3-dehydroshikimate + H2O. The protein operates within aromatic compound metabolism; 3,4-dihydroxybenzoate biosynthesis; 3,4-dihydroxybenzoate from 3-dehydroquinate: step 1/2. Functionally, is involved in the catabolism of quinate. Allows the utilization of quinate as carbon source via the beta-ketoadipate pathway. The protein is Catabolic 3-dehydroquinase 1 of Neosartorya fischeri (strain ATCC 1020 / DSM 3700 / CBS 544.65 / FGSC A1164 / JCM 1740 / NRRL 181 / WB 181) (Aspergillus fischerianus).